The primary structure comprises 66 residues: Large ribosomal subunit protein bL35 (66 aa).

Over residues 1-16 (MPKQKTHRASAKRFKR) the composition is skewed to basic residues. Positions 1 to 21 (MPKQKTHRASAKRFKRTGSGG) are disordered.

The protein belongs to the bacterial ribosomal protein bL35 family.

The sequence is that of Large ribosomal subunit protein bL35 from Streptococcus pneumoniae serotype 2 (strain D39 / NCTC 7466).